Consider the following 647-residue polypeptide: Cartilage acidic protein 1 (647 aa).

Residues 1–30 (MMLPADFFVPVSKMMLLALLLSIIICCGGA) form the signal peptide. The stretch at 48-90 (DYDSNPTQLNYGVAITDVDNDGDFEVVVAGYNGPNLVLKYIKE) is one FG-GAP 1; atypical repeat. An FG-GAP 2; atypical repeat occupies 107–149 (YALRDRQGNAIGVAACDIDGDGREEIYFLNTNNAFSGIATYSD). The stretch at 285–335 (TGVDDVYQHGRGVALADFNRDGKVDIVYGNWNGPHRLFLQMNTNGKVRFRD) is one FG-GAP 3; atypical repeat. One copy of the FG-GAP 4; atypical repeat lies at 397–439 (GDASEPDGRGTGGAVTDFDGDGMLDLILSHGESMAQPLSVFKG). The EGF-like domain maps to 561-607 (DTDECIQFPFVCPREKPVCINTYGGYKCRPNRRCSRGFEPNEDGTAC). Intrachain disulfides connect cysteine 565–cysteine 579, cysteine 572–cysteine 588, and cysteine 594–cysteine 607.

Its subcellular location is the secreted. The protein localises to the extracellular space. It is found in the extracellular matrix. This is Cartilage acidic protein 1 (crtac1) from Xenopus tropicalis (Western clawed frog).